The following is a 391-amino-acid chain: MAEKIVMKNGQLQVSDRPIIPFIEGDGVGHDIWKNAQAIFDKAVEVAYEGKRHIEWQELLAGKKAYDKTGEWLPKETLEAIRESLVAIKGPLETPVGGGIRSLNVALRQELDLYACVRPVRYFDGVASPLKEPEKTNITIFRENTEDIYAGIEWEAGTADVKRVIEFLQTEMNVNKIRFPESSSIGIKPISIEGSKRLIRSAIDYALKNNLKKVTLVHKGNIQKFTEGGFRKWGYEVAQEDYKEELLAGRLEINDIIADNFLQQILLNPEKFDVVALTNLNGDYASDALAAQVGGIGISPGANINYQTGHAIFEATHGTAPDIADQDKANPCSVLLSGCMLLDYIGWTEAAQLITSAIEKTFKADIFTADLAFGKQAYSTSAFSNQILSIM.

D-threo-isocitrate is bound by residues S102, N104, R108, R118, and R142. D283 serves as a coordination point for Mg(2+).

Belongs to the isocitrate and isopropylmalate dehydrogenases family. In terms of assembly, homodimer. Mg(2+) serves as cofactor. Requires Mn(2+) as cofactor.

The catalysed reaction is D-threo-isocitrate + NADP(+) = 2-oxoglutarate + CO2 + NADPH. In terms of biological role, catalyzes the oxidative decarboxylation of isocitrate to 2-oxoglutarate and carbon dioxide with the concomitant reduction of NADP(+). This Streptococcus salivarius protein is Isocitrate dehydrogenase [NADP] (icd).